Here is a 631-residue protein sequence, read N- to C-terminus: Translation factor GUF1, mitochondrial (631 aa).

Residues 1–19 (MFNRRLLRHVRYAFQQVRS) constitute a mitochondrion transit peptide. A tr-type G domain is found at 33–214 (ERYRNFSIVA…AIVDRIPPPT (182 aa)). GTP contacts are provided by residues 42–49 (AHVDHGKS), 107–111 (DTPGH), and 161–164 (NKID).

The protein belongs to the TRAFAC class translation factor GTPase superfamily. Classic translation factor GTPase family. LepA subfamily.

The protein resides in the mitochondrion inner membrane. The catalysed reaction is GTP + H2O = GDP + phosphate + H(+). Its function is as follows. Promotes mitochondrial protein synthesis. May act as a fidelity factor of the translation reaction, by catalyzing a one-codon backward translocation of tRNAs on improperly translocated ribosomes. Binds to mitochondrial ribosomes in a GTP-dependent manner. The polypeptide is Translation factor GUF1, mitochondrial (Kluyveromyces lactis (strain ATCC 8585 / CBS 2359 / DSM 70799 / NBRC 1267 / NRRL Y-1140 / WM37) (Yeast)).